The chain runs to 179 residues: UPF0398 protein Bsph_0756 (179 aa).

The protein belongs to the UPF0398 family.

The polypeptide is UPF0398 protein Bsph_0756 (Lysinibacillus sphaericus (strain C3-41)).